A 427-amino-acid chain; its full sequence is Glutamate-1-semialdehyde 2,1-aminomutase 1 (427 aa).

Position 265 is an N6-(pyridoxal phosphate)lysine (K265).

This sequence belongs to the class-III pyridoxal-phosphate-dependent aminotransferase family. HemL subfamily. As to quaternary structure, homodimer. The cofactor is pyridoxal 5'-phosphate.

It is found in the cytoplasm. It catalyses the reaction (S)-4-amino-5-oxopentanoate = 5-aminolevulinate. Its pathway is porphyrin-containing compound metabolism; protoporphyrin-IX biosynthesis; 5-aminolevulinate from L-glutamyl-tRNA(Glu): step 2/2. The protein is Glutamate-1-semialdehyde 2,1-aminomutase 1 of Lachnoclostridium phytofermentans (strain ATCC 700394 / DSM 18823 / ISDg) (Clostridium phytofermentans).